Consider the following 150-residue polypeptide: Large ribosomal subunit protein uL15 (150 aa).

It belongs to the universal ribosomal protein uL15 family. As to quaternary structure, part of the 50S ribosomal subunit.

Its function is as follows. Binds to the 23S rRNA. The chain is Large ribosomal subunit protein uL15 from Anaplasma marginale (strain Florida).